We begin with the raw amino-acid sequence, 397 residues long: Elongation factor Tu (397 aa).

The tr-type G domain maps to 10 to 207; sequence KPHLNIGTIG…AVDAYIPEPE (198 aa). Positions 19-26 are G1; it reads GHVDHGKT. 19-26 serves as a coordination point for GTP; that stretch reads GHVDHGKT. Thr26 contributes to the Mg(2+) binding site. The G2 stretch occupies residues 60–64; that stretch reads GVTIN. Residues 81 to 84 form a G3 region; that stretch reads DCPG. GTP contacts are provided by residues 81-85 and 136-139; these read DCPGH and NKVD. Residues 136–139 are G4; the sequence is NKVD. A G5 region spans residues 174-176; the sequence is SAL.

This sequence belongs to the TRAFAC class translation factor GTPase superfamily. Classic translation factor GTPase family. EF-Tu/EF-1A subfamily. Monomer.

It localises to the cytoplasm. The catalysed reaction is GTP + H2O = GDP + phosphate + H(+). Its function is as follows. GTP hydrolase that promotes the GTP-dependent binding of aminoacyl-tRNA to the A-site of ribosomes during protein biosynthesis. In Syntrophus aciditrophicus (strain SB), this protein is Elongation factor Tu.